Consider the following 80-residue polypeptide: Waprin-Phi3 (80 aa).

An N-terminal signal peptide occupies residues 1–22; that stretch reads MKPWILLLLAGLLILSTQLTTA. Residues 31 to 78 form the WAP domain; sequence PKVKPGECPKVKIPPDYPCNQYCVWDFDCEGNKKCCPVGCAKECFPPG. Intrachain disulfides connect Cys-38–Cys-66, Cys-49–Cys-70, Cys-53–Cys-65, and Cys-59–Cys-74.

This sequence belongs to the venom waprin family. Expressed by the venom gland.

It localises to the secreted. Its function is as follows. Damages membranes of susceptible bacteria. Has no hemolytic activity. Not toxic to mice. Does not inhibit the proteinases elastase and cathepsin G. The polypeptide is Waprin-Phi3 (Philodryas olfersii (Green snake)).